Reading from the N-terminus, the 168-residue chain is Replicase polyprotein 1ab (168 aa).

The region spanning 1-165 is the Nidovirus-type SAM-dependent 2'-O-MTase domain; it reads PNTKSIDGEN…KLLNFGNHLV (165 aa).

Functionally, the replicase polyprotein of coronaviruses is a multifunctional protein: it contains the activities necessary for the transcription of negative stranded RNA, leader RNA, subgenomic mRNAs and progeny virion RNA as well as proteinases responsible for the cleavage of the polyprotein into functional products. The sequence is that of Replicase polyprotein 1ab (rep) from Canine coronavirus (strain Insavc-1) (CCoV).